We begin with the raw amino-acid sequence, 400 residues long: Riboflavin biosynthesis protein RibBA (400 aa).

The interval 1–202 (MTTFGTIEQA…IADLVMYRRR (202 aa)) is DHBP synthase. Residues 28-29 (RE), Asp33, 141-145 (RTGHT), and Glu165 each bind D-ribulose 5-phosphate. A Mg(2+)-binding site is contributed by Glu29. Position 144 (His144) interacts with Mg(2+). The segment at 203-400 (TEKQVELVAE…KRDRMGHLLG (198 aa)) is GTP cyclohydrolase II. Residue 253–257 (RAHSE) coordinates GTP. Zn(2+)-binding residues include Cys258, Cys269, and Cys271. GTP-binding positions include Gln274, 297–299 (EGR), and Thr319. The active-site Proton acceptor; for GTP cyclohydrolase activity is the Asp331. The active-site Nucleophile; for GTP cyclohydrolase activity is Arg333. Residues Thr354 and Lys359 each coordinate GTP.

It in the N-terminal section; belongs to the DHBP synthase family. The protein in the C-terminal section; belongs to the GTP cyclohydrolase II family. Mg(2+) serves as cofactor. Requires Mn(2+) as cofactor. The cofactor is Zn(2+).

The catalysed reaction is D-ribulose 5-phosphate = (2S)-2-hydroxy-3-oxobutyl phosphate + formate + H(+). It carries out the reaction GTP + 4 H2O = 2,5-diamino-6-hydroxy-4-(5-phosphoribosylamino)-pyrimidine + formate + 2 phosphate + 3 H(+). The protein operates within cofactor biosynthesis; riboflavin biosynthesis; 2-hydroxy-3-oxobutyl phosphate from D-ribulose 5-phosphate: step 1/1. Its pathway is cofactor biosynthesis; riboflavin biosynthesis; 5-amino-6-(D-ribitylamino)uracil from GTP: step 1/4. Functionally, catalyzes the conversion of D-ribulose 5-phosphate to formate and 3,4-dihydroxy-2-butanone 4-phosphate. Its function is as follows. Catalyzes the conversion of GTP to 2,5-diamino-6-ribosylamino-4(3H)-pyrimidinone 5'-phosphate (DARP), formate and pyrophosphate. The protein is Riboflavin biosynthesis protein RibBA of Salinispora tropica (strain ATCC BAA-916 / DSM 44818 / JCM 13857 / NBRC 105044 / CNB-440).